A 167-amino-acid chain; its full sequence is Phospholipase A and acyltransferase 1 (167 aa).

The Cytoplasmic portion of the chain corresponds to 1 to 138 (MAVNDCFSLT…GEGVSEQANR (138 aa)). The region spanning 20–135 (LIEVFRPCYQ…LRYGEGVSEQ (116 aa)) is the LRAT domain. His-30 is an active-site residue. Cys-119 functions as the Acyl-thioester intermediate in the catalytic mechanism. The helical transmembrane segment at 139–159 (AIGTIGLVAAGIDIFTFLGLF) threads the bilayer. The Lumenal portion of the chain corresponds to 160–167 (PKRQGAKS).

Belongs to the H-rev107 family.

Its subcellular location is the membrane. It is found in the cytoplasm. The protein localises to the nucleus. The enzyme catalyses a 1,2-diacyl-sn-glycero-3-phosphocholine + H2O = a 1-acyl-sn-glycero-3-phosphocholine + a fatty acid + H(+). The catalysed reaction is a 1,2-diacyl-sn-glycero-3-phosphocholine + H2O = a 2-acyl-sn-glycero-3-phosphocholine + a fatty acid + H(+). It carries out the reaction 1,2-dihexadecanoyl-sn-glycero-3-phosphocholine + H2O = 2-hexadecanoyl-sn-glycero-3-phosphocholine + hexadecanoate + H(+). It catalyses the reaction 1,2-dihexadecanoyl-sn-glycero-3-phosphocholine + H2O = 1-hexadecanoyl-sn-glycero-3-phosphocholine + hexadecanoate + H(+). The enzyme catalyses 1-hexadecanoyl-2-(5Z,8Z,11Z,14Z-eicosatetraenoyl)-sn-glycero-3-phosphoethanolamine + H2O = 2-(5Z,8Z,11Z,14Z)-eicosatetraenoyl-sn-glycero-3-phosphoethanolamine + hexadecanoate + H(+). The catalysed reaction is 1-hexadecanoyl-2-(5Z,8Z,11Z,14Z-eicosatetraenoyl)-sn-glycero-3-phosphoethanolamine + H2O = 1-hexadecanoyl-sn-glycero-3-phosphoethanolamine + (5Z,8Z,11Z,14Z)-eicosatetraenoate + H(+). It carries out the reaction 1,2-di-(9Z-octadecenoyl)-sn-glycero-3-phosphoethanolamine + 1,2-dihexadecanoyl-sn-glycero-3-phosphocholine = hexadecanoyl-sn-glycero-3-phosphocholine + N-hexadecanoyl-1,2-di-(9Z-octadecenoyl)-sn-glycero-3-phosphoethanolamine + H(+). It catalyses the reaction 1,2-dihexadecanoyl-sn-glycero-3-phosphocholine + a 2-acyl-sn-glycero-3-phosphocholine = a 1-hexadecanoyl-2-acyl-sn-glycero-3-phosphocholine + 2-hexadecanoyl-sn-glycero-3-phosphocholine. In terms of biological role, exhibits both phospholipase A1/2 and acyltransferase activities. Shows phospholipase A1 (PLA1) and A2 (PLA2) activity, catalyzing the calcium-independent release of fatty acids from the sn-1 or sn-2 position of glycerophospholipids. Shows O-acyltransferase activity, catalyzing the transfer of a fatty acyl group from glycerophospholipid to the hydroxyl group of lysophospholipid. The protein is Phospholipase A and acyltransferase 1 of Rattus norvegicus (Rat).